The sequence spans 49 residues: uncharacterized protein (49 aa).

This is an uncharacterized protein from Homo sapiens (Human).